The sequence spans 270 residues: Multi-heme protein MamP (270 aa).

At 1-6 (MNSKLV) the chain is on the cytoplasmic side. A transmembrane helix spans residues 7 to 20 (LLVVGVVFALVLVI). Residues 21 to 270 (GRQGGVVAPQ…GPCEACHVIN (250 aa)) lie on the Lumenal side of the membrane. The PDZ stretch occupies residues 84 to 201 (NLKVFEGHWQ…GGLGFAQLEG (118 aa)). Positions 205-225 (ILPGDPRPHGYRGACTDCHPV) match the MCR (magnetochrome) 1 motif. Heme is bound by residues Cys219, Cys222, His223, Cys263, Cys266, and His267. The MCR 2 signature appears at 245–269 (ITRDAVTRGVSPHEVRGPCEACHVI).

This sequence belongs to the magnetosome MamP family. As to quaternary structure, homodimer. Heme serves as cofactor. Post-translationally, subject to proteolytic cleavage which requires both MamE and MamO.

Its subcellular location is the cell inner membrane. Involved in redox-control of magnetite formation. Oxidizes Fe(2+) at alkaline pH; successively forms ferrihydrite (Fe(3+)(2)O(3) 0.5 H(2)O) then magnetite (Fe(3)O(4)) from an Fe(2+) solution. In Magnetospirillum gryphiswaldense (strain DSM 6361 / JCM 21280 / NBRC 15271 / MSR-1), this protein is Multi-heme protein MamP.